The primary structure comprises 475 residues: Transmembrane protein 44 (475 aa).

Residues 1 to 29 (MGEAPSPAPALWDWDYLDRCFARHRVCIS) lie on the Extracellular side of the membrane. A helical transmembrane segment spans residues 30 to 50 (FGLWICASSCWIAAHALLLYL). Over 51 to 61 (RCAQKPRQDQS) the chain is Cytoplasmic. The helical transmembrane segment at 62 to 82 (ALCAACCLLTSLCDTVGALLA) threads the bilayer. At 83 to 88 (RQLTIQ) the chain is on the extracellular side. The chain crosses the membrane as a helical span at residues 89-109 (VFTGAYLAAIDLVNFMFILFP). Residues 110 to 135 (VCGSKFKSNSDREARERKRRRQLRAS) lie on the Cytoplasmic side of the membrane. Residues 136–156 (VFALALPLSLGPCWALWVAVP) form a helical membrane-spanning segment. Topologically, residues 157–179 (KASATIRGPQRRLLASLLQENTE) are extracellular. Residues 180-200 (ILGYLLGSVAAFGSWASRIPP) traverse the membrane as a helical segment. The Cytoplasmic portion of the chain corresponds to 201 to 259 (LSRIAPPPTLGITTQHEIWRGQMSKPSQSPSRSPSGHWRAAAQRQVLGTEMCRGKTFPS). A helical membrane pass occupies residues 260–280 (IHLWTRLLSALAGLLYASAIV). The Extracellular portion of the chain corresponds to 281–294 (AHDQHPEYLLRATP). The chain crosses the membrane as a helical span at residues 295 to 315 (WFLTSLGRAALDLAIIFLSCV). Residues 316–475 (MKSKMRQALG…VRTAHLSDDD (160 aa)) are Cytoplasmic-facing. The tract at residues 390 to 475 (SATRLPGDGQ…VRTAHLSDDD (86 aa)) is disordered. A compositionally biased stretch (low complexity) spans 424–436 (SSGSSSEVSSINS). The segment covering 464 to 475 (DSVRTAHLSDDD) has biased composition (basic and acidic residues). Serine 465 bears the Phosphoserine mark.

The protein localises to the membrane. This Homo sapiens (Human) protein is Transmembrane protein 44 (TMEM44).